The primary structure comprises 303 residues: MTSRFRHVALIGKYQASGARAQADARDGVMEDIGAFLESQGCEVFVEKSAAEEADADASVGGRYQPLTVEEIGQRCDLGLVVGGDGTMLGIGRQLACYGIPLIGINRGRLGFITDIPLDNYQATLIPMLAGEYEEDHRSLMHAQVMRDGASVFDALAMNDVVVNRGATSGMVELRVSVGRHFVANQRADGLIIASPTGSTAYALSAGGPLLHPAVPGWVLVPIAPHTLSNRPVLLPDADEIVIELVAGRDASANFDMQSLASLAIGDRVVVRRSDFRVRFLHPRGWSYFDTLRKKLHWNEGGS.

Residue D85 is the Proton acceptor of the active site. Residues 85-86, 159-160, R187, D189, 200-205, A224, and Q258 each bind NAD(+); these read DG, ND, and TAYALS.

This sequence belongs to the NAD kinase family. It depends on a divalent metal cation as a cofactor.

It is found in the cytoplasm. It carries out the reaction NAD(+) + ATP = ADP + NADP(+) + H(+). Functionally, involved in the regulation of the intracellular balance of NAD and NADP, and is a key enzyme in the biosynthesis of NADP. Catalyzes specifically the phosphorylation on 2'-hydroxyl of the adenosine moiety of NAD to yield NADP. The polypeptide is NAD kinase (Variovorax paradoxus (strain S110)).